Reading from the N-terminus, the 567-residue chain is ETHYLENE INSENSITIVE 3-like 3 protein (567 aa).

A coiled-coil region spans residues 24–44 (NVAEIDVSDEEIDADDLERRM). 2 disordered regions span residues 55 to 81 (KERQ…AQRK) and 286 to 393 (IQQP…RNIL). The span at 69-79 (ETPKKISDQAQ) shows a compositional bias: basic and acidic residues. Residues 162 to 288 (SQFVLQDLQD…LNQEESLIQQ (127 aa)) mediate DNA binding. The segment covering 286 to 299 (IQQPSSDNGNSNVT) has biased composition (polar residues). Basic and acidic residues predominate over residues 300–312 (ETHRRGNNADRRK). The segment covering 363 to 372 (KHRRRKRPRI) has biased composition (basic residues).

This sequence belongs to the EIN3 family. Interacts with MYB72.

It localises to the nucleus. Probable transcription factor that may be involved in the ethylene response pathway. The protein is ETHYLENE INSENSITIVE 3-like 3 protein (EIL3) of Arabidopsis thaliana (Mouse-ear cress).